The following is a 261-amino-acid chain: Polyamine aminopropyltransferase (261 aa).

In terms of domain architecture, PABS spans 1–219 (MHPFRRRVRP…AVMAFRQSPS (219 aa)). Residues Asp96 and 124 to 125 (DG) each bind S-methyl-5'-thioadenosine. The active-site Proton acceptor is the Asp142.

This sequence belongs to the spermidine/spermine synthase family. In terms of assembly, homodimer or homotetramer.

Its subcellular location is the cytoplasm. It catalyses the reaction S-adenosyl 3-(methylsulfanyl)propylamine + putrescine = S-methyl-5'-thioadenosine + spermidine + H(+). It participates in amine and polyamine biosynthesis; spermidine biosynthesis; spermidine from putrescine: step 1/1. Its function is as follows. Catalyzes the irreversible transfer of a propylamine group from the amino donor S-adenosylmethioninamine (decarboxy-AdoMet) to putrescine (1,4-diaminobutane) to yield spermidine. This is Polyamine aminopropyltransferase from Chromobacterium violaceum (strain ATCC 12472 / DSM 30191 / JCM 1249 / CCUG 213 / NBRC 12614 / NCIMB 9131 / NCTC 9757 / MK).